The following is a 180-amino-acid chain: Hypoxanthine-guanine phosphoribosyltransferase (180 aa).

Diphosphate-binding residues include Lys43 and Gly44. Mg(2+) is bound by residues Glu99 and Asp100. Asp103 serves as the catalytic Proton acceptor. GMP is bound by residues Lys131, Phe152–Val153, and Asp159. Residue Arg165 coordinates diphosphate.

It belongs to the purine/pyrimidine phosphoribosyltransferase family. It depends on Mg(2+) as a cofactor.

Its subcellular location is the cytoplasm. It catalyses the reaction IMP + diphosphate = hypoxanthine + 5-phospho-alpha-D-ribose 1-diphosphate. The enzyme catalyses GMP + diphosphate = guanine + 5-phospho-alpha-D-ribose 1-diphosphate. It participates in purine metabolism; IMP biosynthesis via salvage pathway; IMP from hypoxanthine: step 1/1. It functions in the pathway purine metabolism; GMP biosynthesis via salvage pathway; GMP from guanine: step 1/1. Functionally, purine salvage pathway enzyme that catalyzes the transfer of the ribosyl-5-phosphate group from 5-phospho-alpha-D-ribose 1-diphosphate (PRPP) to the N9 position of the 6-oxopurines hypoxanthine and guanine to form the corresponding ribonucleotides IMP (inosine 5'-monophosphate) and GMP (guanosine 5'-monophosphate), with the release of PPi. The polypeptide is Hypoxanthine-guanine phosphoribosyltransferase (hprT) (Bacillus subtilis (strain 168)).